Reading from the N-terminus, the 482-residue chain is Bifunctional protein HldE (482 aa).

Residues 1 to 322 (MFGLESKSPK…QYIHTQPSNL (322 aa)) are ribokinase. Residue 198–201 (NKKE) participates in ATP binding. Residue Asp267 is part of the active site. Positions 350–482 (FTNGCFDILH…IQRSKICKHS (133 aa)) are cytidylyltransferase.

This sequence in the N-terminal section; belongs to the carbohydrate kinase PfkB family. It in the C-terminal section; belongs to the cytidylyltransferase family. As to quaternary structure, homodimer.

It carries out the reaction D-glycero-beta-D-manno-heptose 7-phosphate + ATP = D-glycero-beta-D-manno-heptose 1,7-bisphosphate + ADP + H(+). It catalyses the reaction D-glycero-beta-D-manno-heptose 1-phosphate + ATP + H(+) = ADP-D-glycero-beta-D-manno-heptose + diphosphate. It functions in the pathway nucleotide-sugar biosynthesis; ADP-L-glycero-beta-D-manno-heptose biosynthesis; ADP-L-glycero-beta-D-manno-heptose from D-glycero-beta-D-manno-heptose 7-phosphate: step 1/4. Its pathway is nucleotide-sugar biosynthesis; ADP-L-glycero-beta-D-manno-heptose biosynthesis; ADP-L-glycero-beta-D-manno-heptose from D-glycero-beta-D-manno-heptose 7-phosphate: step 3/4. It participates in bacterial outer membrane biogenesis; LPS core biosynthesis. In terms of biological role, catalyzes the phosphorylation of D-glycero-D-manno-heptose 7-phosphate at the C-1 position to selectively form D-glycero-beta-D-manno-heptose-1,7-bisphosphate. Catalyzes the ADP transfer from ATP to D-glycero-beta-D-manno-heptose 1-phosphate, yielding ADP-D-glycero-beta-D-manno-heptose. The chain is Bifunctional protein HldE from Helicobacter hepaticus (strain ATCC 51449 / 3B1).